We begin with the raw amino-acid sequence, 265 residues long: MQRYAVGIEFSGIQYRGWQTQQPGVASVQETIELVLSKIADEPITLHGAGRTDAGVHATNMVAHFDTNAIRPERGWIMGANSQLPKDISIQWIKQMDEEFHARFKATARRYRYVVYNAPHRPALLHKQVTHIYQKLDVQKMIKAASKFEGTHNFETFRAAACQSNQPVRHVKHCRLFEHGRYLVLDIQADGFLHHMVRNIMGCLLEIGQGMYEIDHIDAMFAAEDRKAAGITAPPDGLYFIQCYYPEQFDLPQPPLGPHWLNLPE.

Asp-53 acts as the Nucleophile in catalysis. Residue Tyr-111 coordinates substrate.

It belongs to the tRNA pseudouridine synthase TruA family. Homodimer.

The catalysed reaction is uridine(38/39/40) in tRNA = pseudouridine(38/39/40) in tRNA. Functionally, formation of pseudouridine at positions 38, 39 and 40 in the anticodon stem and loop of transfer RNAs. The sequence is that of tRNA pseudouridine synthase A from Acinetobacter baumannii (strain ACICU).